Reading from the N-terminus, the 441-residue chain is Homoserine dehydrogenase (441 aa).

The NADP(+) site is built by Asn17 and Val18. NAD(+)-binding residues include Val18, Val37, and Gly47. Residue Val18 coordinates NADPH. Arg49, Arg50, and Lys107 together coordinate NADP(+). Residue Arg49 coordinates NADPH. Residue Lys107 coordinates NADPH. Na(+)-binding residues include Glu131, Val134, Gly136, and Ile138. 2 residues coordinate NADP(+): Gly189 and Glu192. L-homoserine contacts are provided by Glu192 and Asp203. Lys207 acts as the Proton donor in catalysis. Gly309 is an NADP(+) binding site. Gly309 is an NAD(+) binding site. Gly309 provides a ligand contact to NADPH. One can recognise an ACT domain in the interval 356–435 (YVSMNVADKP…VVQGVSSVIR (80 aa)).

The protein belongs to the homoserine dehydrogenase family. Requires a metal cation as cofactor.

It catalyses the reaction L-homoserine + NADP(+) = L-aspartate 4-semialdehyde + NADPH + H(+). It carries out the reaction L-homoserine + NAD(+) = L-aspartate 4-semialdehyde + NADH + H(+). It participates in amino-acid biosynthesis; L-methionine biosynthesis via de novo pathway; L-homoserine from L-aspartate: step 3/3. The protein operates within amino-acid biosynthesis; L-threonine biosynthesis; L-threonine from L-aspartate: step 3/5. Functionally, catalyzes the conversion of L-aspartate-beta-semialdehyde (L-Asa) to L-homoserine (L-Hse), the third step in the biosynthesis of threonine and methionine from aspartate. The sequence is that of Homoserine dehydrogenase (hom) from Mycobacterium tuberculosis (strain CDC 1551 / Oshkosh).